Consider the following 170-residue polypeptide: MNRNNPLEVLGHVSWLWASSPLHRNWPVSLFAINVLPAIRANQYALLTRDNYPVAYCSWANLSLENEIKYLNDVTSLVAEDWTSGDRKWFIVWIAPFGDNGALYKYMRKKFPDELFRAIRVDPKTHVGKVSEFHGGKIDKQLANKIFKQYHHELITEVKNKSDFNFSLTG.

Histidine 23 is an active-site residue. Histidine 151 provides a ligand contact to heme.

Belongs to the RTX toxin acyltransferase family. Monomer. Proteolytically cleaved by the protease systems ClpAP, ClpXP and FtsH, leading to its degradation.

The protein localises to the cytoplasm. It carries out the reaction tetradecanoyl-[ACP] + L-lysyl-[protein] = N(6)-tetradecanoyl-L-lysyl-[protein] + holo-[ACP] + H(+). Its activity is regulated as follows. The acyltransferase activity is inhibited by heme. Functionally, protein-lysine myristoyltransferase that catalyzes myristoylation of the protoxin (HlyA) at two internal lysine residues, thereby converting it to the active toxin. The polypeptide is Protein-lysine myristoyltransferase HlyC (Escherichia coli).